The primary structure comprises 142 residues: Biogenesis of lysosome-related organelles complex 1 subunit 2 (142 aa).

The segment at 1–33 (MAAAAEGVLATRSDEPARDDAAVETAEEAKEPA) is disordered. Position 2 is an N-acetylalanine (Ala2). Basic and acidic residues predominate over residues 12 to 33 (RSDEPARDDAAVETAEEAKEPA). Residues 79–127 (EMKDIAINISRNLKDLNQKYAGLQPYLDQINVIEEQVAALEQAAYKLDA) adopt a coiled-coil conformation.

This sequence belongs to the BLOC1S2 family. Component of the biogenesis of lysosome-related organelles complex 1 (BLOC-1) composed of BLOC1S1, BLOC1S2, BLOC1S3, BLOC1S4, BLOC1S5, BLOC1S6, DTNBP1/BLOC1S7 and SNAPIN/BLOC1S8. Octamer composed of one copy each BLOC1S1, BLOC1S2, BLOC1S3, BLOC1S4, BLOC1S5, BLOC1S6, DTNBP1/BLOC1S7 and SNAPIN/BLOC1S8. Interacts directly with BLOC1S1, BLOC1S3, BLOC1S4, BLOC1S5 and SNAPIN. The BLOC-1 complex associates with the AP-3 protein complex and membrane protein cargos. Component of the BLOC-one-related complex (BORC) which is composed of BLOC1S1, BLOC1S2, BORCS5, BORCS6, BORCS7, BORCS8, KXD1 and SNAPIN. Interacts with gamma-tubulin. Interacts with IFT57. In terms of tissue distribution, isoform 1 and isoform 2 are widely expressed. Expressed in various malignant tumor tissues (at protein level).

It is found in the cytoplasm. It localises to the cytoskeleton. The protein resides in the microtubule organizing center. Its subcellular location is the centrosome. The protein localises to the lysosome membrane. In terms of biological role, component of the BLOC-1 complex, a complex that is required for normal biogenesis of lysosome-related organelles (LRO), such as platelet dense granules and melanosomes. In concert with the AP-3 complex, the BLOC-1 complex is required to target membrane protein cargos into vesicles assembled at cell bodies for delivery into neurites and nerve terminals. The BLOC-1 complex, in association with SNARE proteins, is also proposed to be involved in neurite extension. As part of the BORC complex may play a role in lysosomes movement and localization at the cell periphery. Associated with the cytosolic face of lysosomes, the BORC complex may recruit ARL8B and couple lysosomes to microtubule plus-end-directed kinesin motor. May play a role in cell proliferation. The protein is Biogenesis of lysosome-related organelles complex 1 subunit 2 (BLOC1S2) of Homo sapiens (Human).